Consider the following 364-residue polypeptide: BOLA class I histocompatibility antigen, alpha chain BL3-7 (364 aa).

The signal sequence occupies residues 1 to 27 (MRVMRVMRPRTLLLLLSGVLVLTETLA). The alpha-1 stretch occupies residues 28 to 117 (GSHSLRYFYT…LRGYYNQSET (90 aa)). Residues 28–310 (GSHSLRYFYT…WEPPQTSFLI (283 aa)) are Extracellular-facing. N-linked (GlcNAc...) asparagine glycosylation is present at Asn-113. The alpha-2 stretch occupies residues 118-209 (GSHNIQAMYG…ENGKDTLLRA (92 aa)). 2 cysteine pairs are disulfide-bonded: Cys-128/Cys-191 and Cys-230/Cys-286. Residues 210–301 (DPPKAHVTHH…GLQEPLTLRW (92 aa)) are alpha-3. One can recognise an Ig-like C1-type domain in the interval 212-298 (PKAHVTHHSI…QHEGLQEPLT (87 aa)). The interval 302 to 310 (EPPQTSFLI) is connecting peptide. A helical membrane pass occupies residues 311-331 (MGIIVGLVLLVVALVAGAVIW). Residues 332–364 (RKKRSGEKGRIYTQAASSDSAQGSDVSLTVPKV) lie on the Cytoplasmic side of the membrane. Phosphoserine is present on residues Ser-355 and Ser-358.

Belongs to the MHC class I family. Heterodimer of an alpha chain and a beta chain (beta-2-microglobulin).

It is found in the membrane. Involved in the presentation of foreign antigens to the immune system. This is BOLA class I histocompatibility antigen, alpha chain BL3-7 from Bos taurus (Bovine).